The following is a 468-amino-acid chain: UDP-N-acetylmuramoylalanine--D-glutamate ligase (468 aa).

117–123 (GTDGKTT) provides a ligand contact to ATP.

The protein belongs to the MurCDEF family.

The protein resides in the cytoplasm. The catalysed reaction is UDP-N-acetyl-alpha-D-muramoyl-L-alanine + D-glutamate + ATP = UDP-N-acetyl-alpha-D-muramoyl-L-alanyl-D-glutamate + ADP + phosphate + H(+). Its pathway is cell wall biogenesis; peptidoglycan biosynthesis. Cell wall formation. Catalyzes the addition of glutamate to the nucleotide precursor UDP-N-acetylmuramoyl-L-alanine (UMA). This is UDP-N-acetylmuramoylalanine--D-glutamate ligase from Chloroherpeton thalassium (strain ATCC 35110 / GB-78).